Consider the following 265-residue polypeptide: MSSDTQRWFGVVSLFPEMFQTFTEQGVTGRAVKSGKLKVDFFNPRDFTHDKHRTVDDRPYGGGPGMLMMVQPLLDAIRAAKQAAEKKTKVIYLSPQGKTLTQRGVKQLSENESVILVAGRYEGIDERVIEAEIDEEWSVGDYILSGGELPAMILMDAVARLVPGVLGHAQSAEQDSFSDGLLDCPHYTRPENLNGQSVPSVLLSGDHQKIKQWRDKQSLGRTWQRRPELLNDLALTEEQQRLLDEYQQELLQQNGSYSGMRGYDE.

S-adenosyl-L-methionine-binding positions include G119 and V139 to L144.

The protein belongs to the RNA methyltransferase TrmD family. Homodimer.

It localises to the cytoplasm. The catalysed reaction is guanosine(37) in tRNA + S-adenosyl-L-methionine = N(1)-methylguanosine(37) in tRNA + S-adenosyl-L-homocysteine + H(+). Functionally, specifically methylates guanosine-37 in various tRNAs. The protein is tRNA (guanine-N(1)-)-methyltransferase of Pseudoalteromonas atlantica (strain T6c / ATCC BAA-1087).